Reading from the N-terminus, the 175-residue chain is Shikimate kinase (175 aa).

Residue 14-19 (GAGKST) coordinates ATP. Ser-18 serves as a coordination point for Mg(2+). The substrate site is built by Asp-36, Arg-60, and Gly-82. Position 120 (Arg-120) interacts with ATP. Arg-140 is a binding site for substrate. Residue Gln-157 coordinates ATP.

Belongs to the shikimate kinase family. In terms of assembly, monomer. Requires Mg(2+) as cofactor.

Its subcellular location is the cytoplasm. The catalysed reaction is shikimate + ATP = 3-phosphoshikimate + ADP + H(+). The protein operates within metabolic intermediate biosynthesis; chorismate biosynthesis; chorismate from D-erythrose 4-phosphate and phosphoenolpyruvate: step 5/7. Catalyzes the specific phosphorylation of the 3-hydroxyl group of shikimic acid using ATP as a cosubstrate. This chain is Shikimate kinase, found in Actinobacillus succinogenes (strain ATCC 55618 / DSM 22257 / CCUG 43843 / 130Z).